The primary structure comprises 814 residues: Threonine--tRNA ligase 2, cytoplasmic (814 aa).

The stretch at 2–72 (AAHIAQRLTV…SLREEQERAR (71 aa)) forms a coiled coil. The disordered stretch occupies residues 62-142 (RSLREEQERA…GHKQEGPCAP (81 aa)). Basic and acidic residues-rich tracts occupy residues 63-72 (SLREEQERAR), 88-102 (EEPK…EKGQ), and 119-137 (GNKK…HKQE). The TGS domain maps to 172–234 (KPIKITLADG…EQDSNVELLK (63 aa)). The Nuclear localization signal signature appears at 798 to 804 (KLKTLKK).

It belongs to the class-II aminoacyl-tRNA synthetase family.

It localises to the cytoplasm. It is found in the nucleus. It catalyses the reaction tRNA(Thr) + L-threonine + ATP = L-threonyl-tRNA(Thr) + AMP + diphosphate + H(+). Functionally, catalyzes the attachment of threonine to tRNA(Thr) in a two-step reaction: threonine is first activated by ATP to form Thr-AMP and then transferred to the acceptor end of tRNA(Thr). Also edits incorrectly charged tRNA(Thr) via its editing domain, at the post-transfer stage. In Xenopus tropicalis (Western clawed frog), this protein is Threonine--tRNA ligase 2, cytoplasmic (tars3).